The chain runs to 106 residues: MARKIKKGDTVKVLSGKDKGKTGEVVTVIPKEDKVVVRGVNIVKRHQRPNAQMRQGGIIEKEAPIYVCKVALVCPSCGQATRVGFRFLDDGRKVRYCKKCGEVIDK.

Belongs to the universal ribosomal protein uL24 family. In terms of assembly, part of the 50S ribosomal subunit.

Its function is as follows. One of two assembly initiator proteins, it binds directly to the 5'-end of the 23S rRNA, where it nucleates assembly of the 50S subunit. In terms of biological role, one of the proteins that surrounds the polypeptide exit tunnel on the outside of the subunit. The polypeptide is Large ribosomal subunit protein uL24 (Thermosipho melanesiensis (strain DSM 12029 / CIP 104789 / BI429)).